The primary structure comprises 310 residues: tRNA-5-methyluridine(54) 2-sulfurtransferase (310 aa).

Positions 3, 6, 22, and 25 each coordinate Zn(2+). ATP-binding residues include alanine 53 and isoleucine 79. Residues cysteine 128 and cysteine 131 each coordinate [4Fe-4S] cluster. The cysteines at positions 128 and 220 are disulfide-linked. Lysine 135 and glycine 154 together coordinate ATP. Cysteine 220 contributes to the [4Fe-4S] cluster binding site. Residues cysteine 272, cysteine 275, cysteine 284, and cysteine 287 each contribute to the Zn(2+) site.

The protein belongs to the TtcA family. TtuA subfamily. In terms of assembly, homodimer. [4Fe-4S] cluster serves as cofactor. Requires Mg(2+) as cofactor.

The enzyme catalyses 5-methyluridine(54) in tRNA + hydrogen sulfide + ATP = 5-methyl-2-thiouridine(54) in tRNA + AMP + diphosphate. The protein operates within tRNA modification. Functionally, catalyzes the ATP-dependent 2-thiolation of 5-methyluridine residue at position 54 in the T loop of tRNAs, leading to 5-methyl-2-thiouridine (m(5)s(2)U or s(2)T). This modification allows thermal stabilization of tRNAs in thermophilic microorganisms, and is required for cell growth at high temperatures. Can use free sulfide as sulfur source in vitro, which may be also the sulfur source in vivo. This Pyrococcus horikoshii (strain ATCC 700860 / DSM 12428 / JCM 9974 / NBRC 100139 / OT-3) protein is tRNA-5-methyluridine(54) 2-sulfurtransferase.